A 297-amino-acid chain; its full sequence is Oxidoreductase aprR (297 aa).

It belongs to the NmrA-type oxidoreductase family. Isoflavone reductase subfamily.

The protein operates within secondary metabolite biosynthesis. Its function is as follows. Oxidoreductase; part of the gene cluster that mediates the biosynthesis of the asperipin-2a, a bicyclic peptide that possesses two macrocyclic ether rings consisting of 14- and 17-membered paracyclophans. The pathway starts with the processing of the precursor aprA by kexin proteases to produce 11 identical copies of the hexapeptide Phe-Tyr-Tyr-Thr-Gly-Tyr. Macrocyclization of asperipin-2a may accompany an alpha-hydroxylation-dehydration sequence to give an imine, which is readily hydrolyzed to yield putative ketone intermediate. The reductase aprR may be required for the final reduction to yield asperipin-2a. In Aspergillus flavus (strain ATCC 200026 / FGSC A1120 / IAM 13836 / NRRL 3357 / JCM 12722 / SRRC 167), this protein is Oxidoreductase aprR.